Consider the following 236-residue polypeptide: Apoptosis regulator Bcl-2 (236 aa).

A BH4 motif is present at residues 10–30 (DNREIVMKYIHYKLSQRGYEW). Thr69 is modified (phosphothreonine; by MAPK8). Ser70 carries the post-translational modification Phosphoserine; by MAPK8 and PKC. Ser84 carries the phosphoserine; by MAPK8 modification. Positions 90 to 104 (VHLTLRRAGDDFSRR) match the BH3 motif. The short motif at 133 to 152 (ELFRDGVNWGRIVAFFEFGG) is the BH1 element. A BH2 motif is present at residues 184–199 (TWIQDNGGWDAFVELY). The chain crosses the membrane as a helical span at residues 209-230 (FSWLSLKALLSLALVGACITLG).

It belongs to the Bcl-2 family. Forms homodimers, and heterodimers with BAX, BAD, BAK and Bcl-X(L). Heterodimerization with BAX requires intact BH1 and BH2 motifs, and is necessary for anti-apoptotic activity. Component of the complex, at least composed of LRPPRC, BECN1 and BCL2; the interactions prevent BECN1 from forming an autophagy-inducing complex with PIK3C3. Interacts with EI24. Also interacts with APAF1, BBC3, BCL2L1, BNIPL, MRPL41 and TP53BP2. Binding to FKBP8 seems to target BCL2 to the mitochondria and probably interferes with the binding of BCL2 to its targets. Interacts with BAG1 in an ATP-dependent manner. Interacts with RAF1 (the 'Ser-338' and 'Ser-339' phosphorylated form). Interacts (via the BH4 domain) with EGLN3; the interaction prevents the formation of the BAX-BCL2 complex and inhibits the anti-apoptotic activity of BCL2. Interacts with G0S2; this interaction also prevents the formation of the anti-apoptotic BAX-BCL2 complex. Interacts with RTL10/BOP. Interacts with the SCF(FBXO10) complex. Interacts (via the loop between motifs BH4 and BH3) with NLRP1 (via LRR repeats), but not with NLRP2, NLRP3, NLRP4, PYCARD, nor MEFV. Interacts with GIMAP3/IAN4, GIMAP4/IAN1 and GIMAP5/IAN5. Interacts with BCAP31. Interacts with IRF3; the interaction is inhibited by Sendai virus infection. Interacts with BECN1; thereby inhibiting autophagy in non-starvation conditions. Interacts with AMBRA1; thereby inhibiting autophagy. Post-translationally, phosphorylation/dephosphorylation on Ser-70 regulates anti-apoptotic activity. Growth factor-stimulated phosphorylation on Ser-70 by PKC is required for the anti-apoptosis activity and occurs during the G2/M phase of the cell cycle. In the absence of growth factors, BCL2 appears to be phosphorylated by other protein kinases such as ERKs and stress-activated kinases. Phosphorylated by MAPK8/JNK1 at Thr-69, Ser-70 and Ser-84, which stimulates starvation-induced autophagy. Dephosphorylated by protein phosphatase 2A (PP2A). Proteolytically cleaved by caspases during apoptosis. The cleaved protein, lacking the BH4 motif, has pro-apoptotic activity, causes the release of cytochrome c into the cytosol promoting further caspase activity. In terms of processing, monoubiquitinated by PRKN, leading to an increase in its stability. Ubiquitinated by SCF(FBXO10), leading to its degradation by the proteasome.

It localises to the mitochondrion outer membrane. Its subcellular location is the nucleus membrane. The protein localises to the endoplasmic reticulum membrane. It is found in the cytoplasm. Suppresses apoptosis in a variety of cell systems including factor-dependent lymphohematopoietic and neural cells. Regulates cell death by controlling the mitochondrial membrane permeability. Appears to function in a feedback loop system with caspases. Inhibits caspase activity either by preventing the release of cytochrome c from the mitochondria and/or by binding to the apoptosis-activating factor (APAF-1). Also acts as an inhibitor of autophagy: interacts with BECN1 and AMBRA1 during non-starvation conditions and inhibits their autophagy function. May attenuate inflammation by impairing NLRP1-inflammasome activation, hence CASP1 activation and IL1B release. The polypeptide is Apoptosis regulator Bcl-2 (BCL2) (Canis lupus familiaris (Dog)).